We begin with the raw amino-acid sequence, 317 residues long: 4-hydroxy-3-methylbut-2-enyl diphosphate reductase (317 aa).

Residue Cys12 participates in [4Fe-4S] cluster binding. Residues His43 and His81 each contribute to the (2E)-4-hydroxy-3-methylbut-2-enyl diphosphate site. The dimethylallyl diphosphate site is built by His43 and His81. The isopentenyl diphosphate site is built by His43 and His81. Cys103 provides a ligand contact to [4Fe-4S] cluster. Position 131 (His131) interacts with (2E)-4-hydroxy-3-methylbut-2-enyl diphosphate. Dimethylallyl diphosphate is bound at residue His131. His131 serves as a coordination point for isopentenyl diphosphate. The active-site Proton donor is Glu133. Thr172 contacts (2E)-4-hydroxy-3-methylbut-2-enyl diphosphate. Position 200 (Cys200) interacts with [4Fe-4S] cluster. 3 residues coordinate (2E)-4-hydroxy-3-methylbut-2-enyl diphosphate: Ser228, Asn230, and Ser273. Dimethylallyl diphosphate contacts are provided by Ser228, Asn230, and Ser273. 3 residues coordinate isopentenyl diphosphate: Ser228, Asn230, and Ser273.

The protein belongs to the IspH family. [4Fe-4S] cluster is required as a cofactor.

The catalysed reaction is isopentenyl diphosphate + 2 oxidized [2Fe-2S]-[ferredoxin] + H2O = (2E)-4-hydroxy-3-methylbut-2-enyl diphosphate + 2 reduced [2Fe-2S]-[ferredoxin] + 2 H(+). The enzyme catalyses dimethylallyl diphosphate + 2 oxidized [2Fe-2S]-[ferredoxin] + H2O = (2E)-4-hydroxy-3-methylbut-2-enyl diphosphate + 2 reduced [2Fe-2S]-[ferredoxin] + 2 H(+). Its pathway is isoprenoid biosynthesis; dimethylallyl diphosphate biosynthesis; dimethylallyl diphosphate from (2E)-4-hydroxy-3-methylbutenyl diphosphate: step 1/1. It functions in the pathway isoprenoid biosynthesis; isopentenyl diphosphate biosynthesis via DXP pathway; isopentenyl diphosphate from 1-deoxy-D-xylulose 5-phosphate: step 6/6. Functionally, catalyzes the conversion of 1-hydroxy-2-methyl-2-(E)-butenyl 4-diphosphate (HMBPP) into a mixture of isopentenyl diphosphate (IPP) and dimethylallyl diphosphate (DMAPP). Acts in the terminal step of the DOXP/MEP pathway for isoprenoid precursor biosynthesis. The polypeptide is 4-hydroxy-3-methylbut-2-enyl diphosphate reductase (Exiguobacterium sp. (strain ATCC BAA-1283 / AT1b)).